Consider the following 419-residue polypeptide: Tyrosine--tRNA ligase (419 aa).

Residue tyrosine 34 participates in L-tyrosine binding. The short motif at 39–48 (PTADSLHLGN) is the 'HIGH' region element. Residues tyrosine 169 and glutamine 173 each contribute to the L-tyrosine site. Positions 229-233 (KFGKS) match the 'KMSKS' region motif. Position 232 (lysine 232) interacts with ATP. The S4 RNA-binding domain occupies 353–419 (LTLVELLISA…GKKKNFVLTY (67 aa)).

This sequence belongs to the class-I aminoacyl-tRNA synthetase family. TyrS type 1 subfamily. In terms of assembly, homodimer.

Its subcellular location is the cytoplasm. The enzyme catalyses tRNA(Tyr) + L-tyrosine + ATP = L-tyrosyl-tRNA(Tyr) + AMP + diphosphate + H(+). Its function is as follows. Catalyzes the attachment of tyrosine to tRNA(Tyr) in a two-step reaction: tyrosine is first activated by ATP to form Tyr-AMP and then transferred to the acceptor end of tRNA(Tyr). The chain is Tyrosine--tRNA ligase from Lactococcus lactis subsp. lactis (strain IL1403) (Streptococcus lactis).